A 177-amino-acid chain; its full sequence is Large ribosomal subunit protein uL5 (177 aa).

It belongs to the universal ribosomal protein uL5 family. As to quaternary structure, part of the 50S ribosomal subunit; part of the 5S rRNA/L5/L18/L25 subcomplex. Contacts the 5S rRNA and the P site tRNA. Forms a bridge to the 30S subunit in the 70S ribosome.

Functionally, this is one of the proteins that bind and probably mediate the attachment of the 5S RNA into the large ribosomal subunit, where it forms part of the central protuberance. In the 70S ribosome it contacts protein S13 of the 30S subunit (bridge B1b), connecting the 2 subunits; this bridge is implicated in subunit movement. Contacts the P site tRNA; the 5S rRNA and some of its associated proteins might help stabilize positioning of ribosome-bound tRNAs. The sequence is that of Large ribosomal subunit protein uL5 from Ehrlichia chaffeensis (strain ATCC CRL-10679 / Arkansas).